Consider the following 348-residue polypeptide: Nitrogenase vanadium-iron protein beta chain (348 aa).

[8Fe-7S] cluster contacts are provided by Cys31, Cys56, Cys115, and Ser153.

Belongs to the NifD/NifK/NifE/NifN family. As to quaternary structure, hexamer of two alpha, two beta, and two delta chains. [8Fe-7S] cluster serves as cofactor.

The catalysed reaction is N2 + 8 reduced [2Fe-2S]-[ferredoxin] + 16 ATP + 16 H2O = H2 + 8 oxidized [2Fe-2S]-[ferredoxin] + 2 NH4(+) + 16 ADP + 16 phosphate + 6 H(+). Its function is as follows. This vanadium-iron protein is part of the nitrogenase complex that catalyzes the key enzymatic reactions in nitrogen fixation. This is Nitrogenase vanadium-iron protein beta chain (vnfK) from Azotobacter salinestris.